Here is a 495-residue protein sequence, read N- to C-terminus: Probable histidine ammonia-lyase (495 aa).

The segment at residues 141–143 (ASG) is a cross-link (5-imidazolinone (Ala-Gly)). A 2,3-didehydroalanine (Ser) modification is found at Ser-142.

It belongs to the PAL/histidase family. Contains an active site 4-methylidene-imidazol-5-one (MIO), which is formed autocatalytically by cyclization and dehydration of residues Ala-Ser-Gly.

Its subcellular location is the cytoplasm. The catalysed reaction is L-histidine = trans-urocanate + NH4(+). It functions in the pathway amino-acid degradation; L-histidine degradation into L-glutamate; N-formimidoyl-L-glutamate from L-histidine: step 1/3. The polypeptide is Probable histidine ammonia-lyase (Thermoplasma volcanium (strain ATCC 51530 / DSM 4299 / JCM 9571 / NBRC 15438 / GSS1)).